We begin with the raw amino-acid sequence, 395 residues long: Beta-1,4-galactosyltransferase 3 (395 aa).

The Cytoplasmic portion of the chain corresponds to 1–10 (MLRRLLERPC). The helical; Signal-anchor for type II membrane protein transmembrane segment at 11-31 (TLALLVGSQLAVMMYLSLGGF) threads the bilayer. Over 32–395 (RSLSALFGRD…ANHTAPHGSH (364 aa)) the chain is Lumenal. N-linked (GlcNAc...) asparagine glycosylation is present at asparagine 57. Cysteine 79 and cysteine 121 are disulfide-bonded. UDP-alpha-D-galactose-binding positions include 132 to 136 (PHRAR), 171 to 173 (FNR), 198 to 199 (VD), tyrosine 228, and tryptophan 260. A disulfide bridge links cysteine 192 with cysteine 211. Aspartate 199 contributes to the Mn(2+) binding site. An N-acetyl-D-glucosamine-binding site is contributed by 262 to 265 (GEDD). Histidine 293 is a binding site for Mn(2+). UDP-alpha-D-galactose is bound at residue 293-295 (HRG). An N-acetyl-D-glucosamine-binding site is contributed by arginine 305. N-linked (GlcNAc...) asparagine glycans are attached at residues asparagine 339 and asparagine 387. Positions 341–395 (TADIGTDPRGPRAPSGPRYPPGSSQAFRQEMLQRRPPARPGPLPTANHTAPHGSH) are disordered.

This sequence belongs to the glycosyltransferase 7 family. Mn(2+) is required as a cofactor.

It localises to the golgi apparatus. Its subcellular location is the golgi stack membrane. The catalysed reaction is an N-acetyl-beta-D-glucosaminyl derivative + UDP-alpha-D-galactose = a beta-D-galactosyl-(1-&gt;4)-N-acetyl-beta-D-glucosaminyl derivative + UDP + H(+). It catalyses the reaction N-acetyl-D-glucosamine + UDP-alpha-D-galactose = beta-D-galactosyl-(1-&gt;4)-N-acetyl-D-glucosamine + UDP + H(+). The enzyme catalyses a beta-D-GlcNAc-(1-&gt;3)-beta-D-Gal-(1-&gt;4)-beta-D-Glc-(1&lt;-&gt;1)-Cer(d18:1(4E)) + UDP-alpha-D-galactose = a neolactoside nLc4Cer(d18:1(4E)) + UDP + H(+). It carries out the reaction a beta-D-glucosylceramide + UDP-alpha-D-galactose = a beta-D-galactosyl-(1-&gt;4)-beta-D-glucosyl-(1&lt;-&gt;1)-ceramide + UDP + H(+). The catalysed reaction is a neolactoside IV(3)-beta-GlcNAc-nLc4Cer + UDP-alpha-D-galactose = a neolactoside nLc6Cer + UDP + H(+). The protein operates within protein modification; protein glycosylation. Responsible for the synthesis of complex-type N-linked oligosaccharides in many glycoproteins as well as the carbohydrate moieties of glycolipids. This chain is Beta-1,4-galactosyltransferase 3 (B4GALT3), found in Cricetulus griseus (Chinese hamster).